A 700-amino-acid polypeptide reads, in one-letter code: Pyrroloquinoline quinone transporter (700 aa).

The first 23 residues, 1–23, serve as a signal peptide directing secretion; that stretch reads MKIFSVRQTVLPALLVLSPVVFA. One can recognise a TBDR plug domain in the interval 39–157; the sequence is SELDTPAAVS…SGGVMNVTTQ (119 aa). 24 beta stranded membrane passes run 132–136, 150–160, 162–171, 177–186, 195–204, 220–227, 233–241, 280–288, 295–301, 335–344, 350–358, 398–405, 411–419, 447–456, 464–468, 500–509, 511–520, 549–556, 563–570, 597–604, 611–617, 637–647, 651–659, and 689–697; these read NVEVL, GVMNVTTQTGQ, PPTIEASSYY, WRYGLKATGA, DVDYTVSTTR, LANAKLGV, SKLSLIFNS, QAGLRYERS, MSVMMYA, GIDSRWTHRG, VTFTTGLNY, DPYLQTQW, LSLDAGVRY, WLPAGSLKYA, YLAAG, TIEIGSKTRI, DGLLSLALFQ, GAELAWDQ, RVNASWTW, MGFASIGY, YAGTEAR, LVGLFTGYKYN, LTVDLFGRV, and YGVGMNIAW. The 536-residue stretch at 162–697 folds into the TBDR beta-barrel domain; it reads PPTIEASSYY…NYGVGMNIAW (536 aa). The TonB C-terminal box motif lies at 680 to 700; sequence YYEPSPGRNYGVGMNIAWRFE.

The protein belongs to the TonB-dependent receptor family.

It is found in the cell outer membrane. In terms of biological role, mediates the TonB-dependent high affinity transport across the outer membrane of pyrroloquinoline quinone (PQQ), a redox cofactor required for the activity of Gcd and Asd dehydrogenases. The uptake process is energised via the TonB-ExbBD complex. Not involved in the transport of an iron-containing substrate under laboratory conditions. This chain is Pyrroloquinoline quinone transporter, found in Escherichia coli (strain K12).